The sequence spans 315 residues: DNA-directed RNA polymerase subunit alpha (315 aa).

The alpha N-terminal domain (alpha-NTD) stretch occupies residues 1–228 (MLEIEKPVIQ…EHFKLFMTLT (228 aa)). The alpha C-terminal domain (alpha-CTD) stretch occupies residues 245–315 (KEKALEMTIE…LGLNLRLNDE (71 aa)).

It belongs to the RNA polymerase alpha chain family. As to quaternary structure, homodimer. The RNAP catalytic core consists of 2 alpha, 1 beta, 1 beta' and 1 omega subunit. When a sigma factor is associated with the core the holoenzyme is formed, which can initiate transcription.

The catalysed reaction is RNA(n) + a ribonucleoside 5'-triphosphate = RNA(n+1) + diphosphate. Its function is as follows. DNA-dependent RNA polymerase catalyzes the transcription of DNA into RNA using the four ribonucleoside triphosphates as substrates. The protein is DNA-directed RNA polymerase subunit alpha of Clostridium perfringens (strain ATCC 13124 / DSM 756 / JCM 1290 / NCIMB 6125 / NCTC 8237 / Type A).